Here is a 137-residue protein sequence, read N- to C-terminus: Bacteriohemerythrin (137 aa).

7 residues coordinate Fe cation: His21, His53, Glu57, His72, His76, His112, and Asp117.

The protein belongs to the hemerythrin family. In terms of assembly, monomer.

In terms of biological role, oxygen-binding protein. May be involved in a storage mechanism or for delivery to oxygen-requiring enzymes. The oxygen-binding site contains two iron atoms. This chain is Bacteriohemerythrin, found in Ralstonia nicotianae (strain ATCC BAA-1114 / GMI1000) (Ralstonia solanacearum).